The primary structure comprises 576 residues: A-type ATP synthase subunit A (576 aa).

228–235 provides a ligand contact to ATP; the sequence is GGFGTGKT.

Belongs to the ATPase alpha/beta chains family. As to quaternary structure, has multiple subunits with at least A(3), B(3), C, D, E, F, H, I and proteolipid K(x).

The protein resides in the cell membrane. It catalyses the reaction ATP + H2O + 4 H(+)(in) = ADP + phosphate + 5 H(+)(out). Its function is as follows. Component of the A-type ATP synthase that produces ATP from ADP in the presence of a proton gradient across the membrane. The A chain is the catalytic subunit. The polypeptide is A-type ATP synthase subunit A (Methanothrix thermoacetophila (strain DSM 6194 / JCM 14653 / NBRC 101360 / PT) (Methanosaeta thermophila)).